The following is a 178-amino-acid chain: uncharacterized protein (178 aa).

The next 4 helical transmembrane spans lie at 29 to 49 (AATG…AYLF), 76 to 96 (VISI…YFLL), 105 to 125 (PGIL…NPIF), and 139 to 159 (IITT…SISF).

The protein localises to the cell membrane. This is an uncharacterized protein from Bacillus subtilis (strain 168).